We begin with the raw amino-acid sequence, 329 residues long: MAELFWFEKYRPRSFDEVVDLEEVKARLREFVRGGNMPHLLFYGPPGTGKTTMALVLARELYGEYWRENTLELNASDERGINVIRERVKEFARTAPVGKAPFKLVILDEADNMTSDAQQALRRIMEMYAQNTRFILLANYVSRIIDPIISRCAVFRFSPMPRSLMAERLRHIAKSEGIELRDDAIDLIYEVSEGDMRKAINLLQVAAATSKVVDANAVASATTMIRPADVVELFNLAFNGDVTKAREKLRELMYVKGIAGIDFIRAFQRELIRMPLDDEVKAEIAELLAEVDYRLTQGSDEELQLLYLLSKLGAIGKRARQTPPPSKRR.

An ATP-binding site is contributed by 44-51 (GPPGTGKT).

This sequence belongs to the activator 1 small subunits family. RfcS subfamily. In terms of assembly, heteromultimer composed of small subunits (RfcS) and large subunits (RfcL).

Functionally, part of the RFC clamp loader complex which loads the PCNA sliding clamp onto DNA. The chain is Replication factor C small subunit 1 from Pyrobaculum arsenaticum (strain DSM 13514 / JCM 11321 / PZ6).